A 266-amino-acid polypeptide reads, in one-letter code: 3-methyl-2-oxobutanoate hydroxymethyltransferase (266 aa).

The Mg(2+) site is built by Asp-45 and Asp-84. 3-methyl-2-oxobutanoate is bound by residues 45–46, Asp-84, and Lys-112; that span reads DS. Glu-114 is a Mg(2+) binding site. The active-site Proton acceptor is Glu-181.

It belongs to the PanB family. In terms of assembly, homodecamer; pentamer of dimers. It depends on Mg(2+) as a cofactor.

The protein resides in the cytoplasm. It catalyses the reaction 3-methyl-2-oxobutanoate + (6R)-5,10-methylene-5,6,7,8-tetrahydrofolate + H2O = 2-dehydropantoate + (6S)-5,6,7,8-tetrahydrofolate. It functions in the pathway cofactor biosynthesis; (R)-pantothenate biosynthesis; (R)-pantoate from 3-methyl-2-oxobutanoate: step 1/2. Functionally, catalyzes the reversible reaction in which hydroxymethyl group from 5,10-methylenetetrahydrofolate is transferred onto alpha-ketoisovalerate to form ketopantoate. The protein is 3-methyl-2-oxobutanoate hydroxymethyltransferase of Stutzerimonas stutzeri (strain A1501) (Pseudomonas stutzeri).